We begin with the raw amino-acid sequence, 208 residues long: MVFDELITEFDRGLRSIAGVSRMSRPVPKPAAAAPAELSAAERKHAAGLMRVNHVGEVCAQALYQAQKLTTSSAGLKEMFEHAAREEEDHLAWTAHRLKDLDSRPSLLNPLWYAGALAIGVVAGRLGDKVSLGFMAETERQVESHLDGHLSELPAADAESRAIVEQMRADEVKHGKSATDAGGIELPMPARMLMRAASKVMTSTAYYL.

Residues E57, E87, H90, E139, E171, and H174 each coordinate Fe cation.

The protein belongs to the COQ7 family. Fe cation serves as cofactor.

It is found in the cell membrane. It carries out the reaction a 5-methoxy-2-methyl-3-(all-trans-polyprenyl)benzene-1,4-diol + AH2 + O2 = a 3-demethylubiquinol + A + H2O. It functions in the pathway cofactor biosynthesis; ubiquinone biosynthesis. Functionally, catalyzes the hydroxylation of 2-nonaprenyl-3-methyl-6-methoxy-1,4-benzoquinol during ubiquinone biosynthesis. The polypeptide is 3-demethoxyubiquinol 3-hydroxylase (Burkholderia mallei (strain NCTC 10229)).